A 778-amino-acid chain; its full sequence is Hyperosmolality-gated Ca2+ permeable channel 1.4 (778 aa).

10 helical membrane-spanning segments follow: residues Ile7 to Ile27, Ile101 to Val121, Phe158 to Lys178, Phe375 to Val395, Phe427 to Met447, Tyr467 to Glu487, Ala512 to Phe532, Pro584 to Phe604, Val626 to Ser646, and Val651 to Cys671. The interval Val738 to Thr778 is disordered. Low complexity predominate over residues Ser753–Ser763.

It belongs to the CSC1 (TC 1.A.17) family.

The protein resides in the membrane. Acts as an osmosensitive calcium-permeable cation channel. The chain is Hyperosmolality-gated Ca2+ permeable channel 1.4 from Arabidopsis thaliana (Mouse-ear cress).